Reading from the N-terminus, the 201-residue chain is Peptide deformylase (201 aa).

The Fe cation site is built by cysteine 114 and histidine 156. Residue glutamate 157 is part of the active site. Histidine 160 is a Fe cation binding site.

It belongs to the polypeptide deformylase family. Requires Fe(2+) as cofactor.

It carries out the reaction N-terminal N-formyl-L-methionyl-[peptide] + H2O = N-terminal L-methionyl-[peptide] + formate. Functionally, removes the formyl group from the N-terminal Met of newly synthesized proteins. Requires at least a dipeptide for an efficient rate of reaction. N-terminal L-methionine is a prerequisite for activity but the enzyme has broad specificity at other positions. This Tropheryma whipplei (strain TW08/27) (Whipple's bacillus) protein is Peptide deformylase.